The chain runs to 83 residues: Small ribosomal subunit protein bS16 (83 aa).

This sequence belongs to the bacterial ribosomal protein bS16 family.

This Shewanella amazonensis (strain ATCC BAA-1098 / SB2B) protein is Small ribosomal subunit protein bS16.